The chain runs to 203 residues: Small ribosomal subunit protein uS4 (203 aa).

The S4 RNA-binding domain maps to 93-153; sequence QRLDSLVYRL…DKSKNIVPIQ (61 aa).

Belongs to the universal ribosomal protein uS4 family. As to quaternary structure, part of the 30S ribosomal subunit. Contacts protein S5. The interaction surface between S4 and S5 is involved in control of translational fidelity.

In terms of biological role, one of the primary rRNA binding proteins, it binds directly to 16S rRNA where it nucleates assembly of the body of the 30S subunit. Its function is as follows. With S5 and S12 plays an important role in translational accuracy. In Leuconostoc citreum (strain KM20), this protein is Small ribosomal subunit protein uS4.